Reading from the N-terminus, the 312-residue chain is Dehydrogenase/reductase SDR family member 7C (312 aa).

A signal peptide spans 1 to 18 (MGVMAMLMLPLLLLGISG). Residues serine 47, leucine 49, tyrosine 192, lysine 196, and serine 227 each coordinate NAD(+). Tyrosine 192 functions as the Proton acceptor in the catalytic mechanism.

This sequence belongs to the short-chain dehydrogenases/reductases (SDR) family.

It localises to the sarcoplasmic reticulum membrane. It catalyses the reaction all-trans-retinol + NAD(+) = all-trans-retinal + NADH + H(+). Functionally, NADH-dependent oxidoreductase which catalyzes the oxidation of all-trans-retinol to all-trans-retinal. Plays a role in the regulation of cardiac and skeletal muscle metabolic functions. Maintains Ca(2+) intracellular homeostasis by repressing Ca(2+) release from the sarcoplasmic reticulum (SR) in myotubes, possibly through local alternations in NAD/NADH or retinol/retinal. Also plays a role in Ca(2+) homeostasis by controlling Ca(2+) overload in the cytosol and the SR in myotubes. Involved in glucose uptake into skeletal muscles and muscle performance by activating PI3K and mTORC2-mediated AKT1 phosphorylation signaling pathways, possibly through the action of its downstream catalytic product all-trans-retinoic acid. The chain is Dehydrogenase/reductase SDR family member 7C from Homo sapiens (Human).